The sequence spans 127 residues: MVQIIKDTNEFKTFLTAAGHKLAVVQFSSKRCGPCKRMFPVFHAMSVKYQNVFFANVDVNNSPELAETCHIKTIPTFQMFKKSQKVTLFSRIKRIICCYRSGFMSNLIFEFCGADAKKLEAKTQELM.

Residues 1-92 (MVQIIKDTNE…SQKVTLFSRI (92 aa)) enclose the Thioredoxin domain. Cys32 and Cys35 are oxidised to a cystine.

Belongs to the thioredoxin family. As to expression, testis-specific. Only expressed during spermiogenesis, prominently in the Golgi apparatus of pachytene spermatocytes and round and elongated spermatids, with a transient localization in the developing acrosome of round spermatids (at protein level).

The protein localises to the cytoplasm. Its subcellular location is the golgi apparatus. May be required for post-translational modifications of proteins required for acrosomal biogenesis. May act by reducing disulfide bonds within the sperm. In Homo sapiens (Human), this protein is Thioredoxin domain-containing protein 8 (TXNDC8).